The primary structure comprises 851 residues: DNA mismatch repair protein MutS (851 aa).

614 to 621 (GPNMGGKS) contacts ATP.

This sequence belongs to the DNA mismatch repair MutS family.

This protein is involved in the repair of mismatches in DNA. It is possible that it carries out the mismatch recognition step. This protein has a weak ATPase activity. This Yersinia enterocolitica serotype O:8 / biotype 1B (strain NCTC 13174 / 8081) protein is DNA mismatch repair protein MutS.